We begin with the raw amino-acid sequence, 317 residues long: Beta-ketoacyl-[acyl-carrier-protein] synthase III (317 aa).

Catalysis depends on residues Cys-112 and His-244. The segment at Gln-245 to Arg-249 is ACP-binding. Asn-274 is an active-site residue.

The protein belongs to the thiolase-like superfamily. FabH family. Homodimer.

It localises to the cytoplasm. It catalyses the reaction malonyl-[ACP] + acetyl-CoA + H(+) = 3-oxobutanoyl-[ACP] + CO2 + CoA. Its pathway is lipid metabolism; fatty acid biosynthesis. In terms of biological role, catalyzes the condensation reaction of fatty acid synthesis by the addition to an acyl acceptor of two carbons from malonyl-ACP. Catalyzes the first condensation reaction which initiates fatty acid synthesis and may therefore play a role in governing the total rate of fatty acid production. Possesses both acetoacetyl-ACP synthase and acetyl transacylase activities. Its substrate specificity determines the biosynthesis of branched-chain and/or straight-chain of fatty acids. This is Beta-ketoacyl-[acyl-carrier-protein] synthase III from Salmonella typhi.